The primary structure comprises 353 residues: Vomeronasal type-1 receptor 1 (353 aa).

Residues 1–56 (MVGDTLKLLSPLMTRYFFLLFYSTDSSDLNENQHPLDFDEMAFGKVKSGISFLIQT) lie on the Extracellular side of the membrane. A helical transmembrane segment spans residues 57–77 (GVGILGNSFLLCFYNLILFTG). Residues 78–84 (HKLRPTD) are Cytoplasmic-facing. Residues 85 to 105 (LILSQLALANSMVLFFKGIPQ) form a helical membrane-spanning segment. Over 106 to 132 (TMAAFGLKYLLNDTGCKFVFYYHRVGT) the chain is Extracellular. N-linked (GlcNAc...) asparagine glycosylation is present at N117. Residues 133–153 (RVSLSTICLLNGFQAIKLNPS) traverse the membrane as a helical segment. The Cytoplasmic segment spans residues 154–169 (ICRWMEIKIRSPRFID). Residues 170 to 190 (FCCLLCWAPHVLMNASVLLLV) traverse the membrane as a helical segment. Topologically, residues 191–226 (NGPLNSKNSSAKNNYGYCSYKASKRFSSLHAVLYFS) are extracellular. An N-linked (GlcNAc...) asparagine glycan is attached at N198. Residues 227 to 247 (PDFMSLGFMVWASGSMVFFLY) traverse the membrane as a helical segment. The Cytoplasmic portion of the chain corresponds to 248-274 (RHKQQVQHNHSNRLSCRPSQEARATHT). The chain crosses the membrane as a helical span at residues 275–295 (IMVLVSSFFVFYSVHSFLTIW). The Extracellular portion of the chain corresponds to 296–303 (TTVVANPG). The helical transmembrane segment at 304–324 (QWIVTNSVLVASCFPARSPFV) threads the bilayer. At 325–353 (LIMSDTHISQFCFACRTRKTLFPNLVVMP) the chain is on the cytoplasmic side.

This sequence belongs to the G-protein coupled receptor 1 family. As to expression, expressed in the olfactory mucosa, very low expression in brain, lung and kidney.

The protein localises to the cell membrane. In terms of biological role, putative pheromone receptor. In Homo sapiens (Human), this protein is Vomeronasal type-1 receptor 1 (VN1R1).